Here is a 510-residue protein sequence, read N- to C-terminus: ATP synthase subunit alpha (510 aa).

Position 169-176 (169-176 (GDRQTGKT)) interacts with ATP.

This sequence belongs to the ATPase alpha/beta chains family. F-type ATPases have 2 components, CF(1) - the catalytic core - and CF(0) - the membrane proton channel. CF(1) has five subunits: alpha(3), beta(3), gamma(1), delta(1), epsilon(1). CF(0) has four main subunits: a(1), b(1), b'(1) and c(9-12).

The protein resides in the cell inner membrane. The catalysed reaction is ATP + H2O + 4 H(+)(in) = ADP + phosphate + 5 H(+)(out). Functionally, produces ATP from ADP in the presence of a proton gradient across the membrane. The alpha chain is a regulatory subunit. The sequence is that of ATP synthase subunit alpha from Rhodopseudomonas palustris (strain BisB5).